A 67-amino-acid chain; its full sequence is Small ribosomal subunit protein eS31 (67 aa).

Zn(2+)-binding residues include cysteine 35, cysteine 38, cysteine 54, and cysteine 57. The C4-type zinc finger occupies 35-57 (CPRCGSIMAHHMKPLERWACGKC).

This sequence belongs to the eukaryotic ribosomal protein eS31 family. As to quaternary structure, part of the 30S ribosomal subunit. Requires Zn(2+) as cofactor.

The polypeptide is Small ribosomal subunit protein eS31 (Sulfolobus acidocaldarius (strain ATCC 33909 / DSM 639 / JCM 8929 / NBRC 15157 / NCIMB 11770)).